We begin with the raw amino-acid sequence, 110 residues long: Large ribosomal subunit protein eL34 (110 aa).

Residues 1 to 41 are disordered; the sequence is MKNVLIHKGATYKTRSNRRRKVRTPSGKLVNRRVKKHSKKH. Over residues 30–41 the composition is skewed to basic residues; it reads VNRRVKKHSKKH.

The protein belongs to the eukaryotic ribosomal protein eL34 family.

This is Large ribosomal subunit protein eL34 (RPL34) from Encephalitozoon cuniculi (strain GB-M1) (Microsporidian parasite).